The chain runs to 467 residues: MAQTLYDKLWDAHVVHQESDGTCLLYIDRHLLHEVTSPQAFEGLALAGRQPWRVGANLAVADHNVPTLNRAQGIEDPISRLQVDTLDDNCAKYGITEFRMNDLRQGIVHVIGPEQGATLPGMTVVCGDSHTSTHGALGALAFGIGTSEVEHVLATQTLLMKKAKSMQINVEGELPFGCTAKDVVLHIIGIIGTAGGTGHAIEFSGSTIRGLSVEGRMTVCNMAIEAGARSGMVAVDDKTIDYFRGRPFAPVGVLWDQAVGYWRTLHSDAGARFDRVINVDARDIKPQVTWGTSPEMVLPVDGRVPDPDREKDDVRRSGMERALEYMGLKPNTPLVDIRVDRVFIGSCTNSRIEDLRAAAVVARGKRVAANVRQAMVVPGSGLVKQQAEREGLDKIFIEAGFEWREPGCSMCLAMNADRLEPGERCASTSNRNFEGRQGQGGRTHLVSPAMAAAAAVAGHFVDVRSFR.

Cysteine 347, cysteine 408, and cysteine 411 together coordinate [4Fe-4S] cluster.

Belongs to the aconitase/IPM isomerase family. LeuC type 1 subfamily. As to quaternary structure, heterodimer of LeuC and LeuD. [4Fe-4S] cluster is required as a cofactor.

It catalyses the reaction (2R,3S)-3-isopropylmalate = (2S)-2-isopropylmalate. It participates in amino-acid biosynthesis; L-leucine biosynthesis; L-leucine from 3-methyl-2-oxobutanoate: step 2/4. Its function is as follows. Catalyzes the isomerization between 2-isopropylmalate and 3-isopropylmalate, via the formation of 2-isopropylmaleate. In Bordetella bronchiseptica (strain ATCC BAA-588 / NCTC 13252 / RB50) (Alcaligenes bronchisepticus), this protein is 3-isopropylmalate dehydratase large subunit.